The primary structure comprises 206 residues: Ras-related protein Rab-18 (206 aa).

Residue Met1 is modified to N-acetylmethionine. GTP contacts are provided by Ser17, Gly20, Lys21, Ser22, Ser23, Asp34, Pro35, Thr40, Gly66, Lys123, and Asp125. Ser22 is a Mg(2+) binding site. Short sequence motifs (switch) lie at residues 31–45 (DTFD…GVDF) and 63–80 (DTAG…YYRG). Thr40 contributes to the Mg(2+) binding site. Residue Ser144 is modified to Phosphoserine. Ala152 provides a ligand contact to GTP. Cys199 is lipidated: S-palmitoyl cysteine. The residue at position 203 (Cys203) is a Cysteine methyl ester. Cys203 carries S-geranylgeranyl cysteine lipidation. Positions 204–206 (SVL) are cleaved as a propeptide — removed in mature form.

Belongs to the small GTPase superfamily. Rab family. In terms of assembly, interacts (in GTP-bound form) with ZFYVE1. Interacts with ZW10 and this interaction is enhanced in the presence of ZFYVE1. Interacts with BSCL2. As to quaternary structure, (Microbial infection) Interacts with Hepatitis C virus (HCV) non-structural protein 5A; this interaction may promote the association of NS5A and other viral replicase components with lipid droplets. Requires Mg(2+) as cofactor. In terms of tissue distribution, ubiquitous.

Its subcellular location is the endoplasmic reticulum membrane. It is found in the golgi apparatus. The protein localises to the cis-Golgi network membrane. It localises to the lipid droplet. The protein resides in the apical cell membrane. It catalyses the reaction GTP + H2O = GDP + phosphate + H(+). Regulated by guanine nucleotide exchange factor (GEF) RAB3GAP1-RAB3GAP2 complex at the cis-Golgi membrane which promotes the exchange of bound GDP for free GTP. Regulated by GTPase activating protein (GAP) TBC1D20 at the ER membrane which increases the GTP hydrolysis activity. Inhibited by GDP dissociation inhibitors (GDIs) which prevent Rab-GDP dissociation. Functionally, the small GTPases Rab are key regulators of intracellular membrane trafficking, from the formation of transport vesicles to their fusion with membranes. Rabs cycle between an inactive GDP-bound form and an active GTP-bound form that is able to recruit to membranes different sets of downstream effectors directly responsible for vesicle formation, movement, tethering and fusion. RAB18 is required for the localization of ZFYVE1 to lipid droplets and for its function in mediating the formation of endoplasmic reticulum-lipid droplets (ER-LD) contacts. Also required for maintaining endoplasmic reticulum structure. Plays a role in apical endocytosis/recycling. Plays a key role in eye and brain development and neurodegeneration. This Homo sapiens (Human) protein is Ras-related protein Rab-18.